The primary structure comprises 423 residues: Histidine--tRNA ligase (423 aa).

Belongs to the class-II aminoacyl-tRNA synthetase family. Homodimer.

It localises to the cytoplasm. It carries out the reaction tRNA(His) + L-histidine + ATP = L-histidyl-tRNA(His) + AMP + diphosphate + H(+). This chain is Histidine--tRNA ligase, found in Moorella thermoacetica (strain ATCC 39073 / JCM 9320).